Here is a 94-residue protein sequence, read N- to C-terminus: Large ribosomal subunit protein uL23 (94 aa).

It belongs to the universal ribosomal protein uL23 family. As to quaternary structure, part of the 50S ribosomal subunit. Contacts protein L29, and trigger factor when it is bound to the ribosome.

In terms of biological role, one of the early assembly proteins it binds 23S rRNA. One of the proteins that surrounds the polypeptide exit tunnel on the outside of the ribosome. Forms the main docking site for trigger factor binding to the ribosome. This chain is Large ribosomal subunit protein uL23, found in Akkermansia muciniphila (strain ATCC BAA-835 / DSM 22959 / JCM 33894 / BCRC 81048 / CCUG 64013 / CIP 107961 / Muc).